The sequence spans 320 residues: Aurora kinase B (320 aa).

Positions 1–10 (MQNKENREPR) are enriched in basic and acidic residues. Residues 1-38 (MQNKENREPRVQQTPSAGVGPLRVEMNPDTHAVSGPGR) form a disordered region. Residues 53 to 303 (FDIGRPLGKG…LRSVMEHPWV (251 aa)) form the Protein kinase domain. ATP is bound by residues 59–67 (LGKGKFGNV) and lysine 82. Aspartate 176 (proton acceptor) is an active-site residue.

The protein belongs to the protein kinase superfamily. Ser/Thr protein kinase family. Aurora subfamily. Component of the chromosomal passenger complex (CPC).

The protein resides in the nucleus. The protein localises to the chromosome. It localises to the centromere. It is found in the cytoplasm. Its subcellular location is the cytoskeleton. The protein resides in the spindle. The protein localises to the midbody. The enzyme catalyses L-seryl-[protein] + ATP = O-phospho-L-seryl-[protein] + ADP + H(+). It carries out the reaction L-threonyl-[protein] + ATP = O-phospho-L-threonyl-[protein] + ADP + H(+). With respect to regulation, kinase activity is stimulated by cell-cycle specific phosphorylation. Serine/threonine-protein kinase component of the chromosomal passenger complex (CPC), a complex that acts as a key regulator of mitosis. The CPC complex has essential functions at the centromere in ensuring correct chromosome alignment and segregation and is required for chromatin-induced microtubule stabilization and spindle assembly. Involved in the bipolar attachment of spindle microtubules to kinetochores and is a key regulator for the onset of cytokinesis during mitosis. Required for central/midzone spindle assembly and cleavage furrow formation. Key component of the cytokinesis checkpoint, a process required to delay abscission to prevent both premature resolution of intercellular chromosome bridges and accumulation of DNA damage. Phosphorylates 'Ser-10' of histone H3 during mitosis. In Danio rerio (Zebrafish), this protein is Aurora kinase B (aurkb).